The sequence spans 68 residues: UPF0435 protein SAOUHSC_02093 (68 aa).

It belongs to the UPF0435 family.

The chain is UPF0435 protein SAOUHSC_02093 from Staphylococcus aureus (strain NCTC 8325 / PS 47).